The sequence spans 296 residues: Nucleotide-binding protein Spy49_0545 (296 aa).

Position 13-20 (Gly13–Thr20) interacts with ATP. Asp63–Ser66 contacts GTP.

The protein belongs to the RapZ-like family.

Displays ATPase and GTPase activities. This Streptococcus pyogenes serotype M49 (strain NZ131) protein is Nucleotide-binding protein Spy49_0545.